Here is a 506-residue protein sequence, read N- to C-terminus: Pisatin demethylase (506 aa).

Residue C453 coordinates heme.

This sequence belongs to the cytochrome P450 family. It depends on heme as a cofactor.

In terms of biological role, can detoxify the phytoalexin pisatin from garden pea. Pisatin is an antimicrobial compound produced by pea in response to infection by plant pathogens. This Fusarium vanettenii (Neocosmospora pisi) protein is Pisatin demethylase (PDA6-1).